We begin with the raw amino-acid sequence, 149 residues long: Gamma-glutamylaminecyclotransferase (149 aa).

7 to 10 (YGTL) is a binding site for substrate. The active-site Proton acceptor is the Glu-82.

Belongs to the gamma-glutamylcyclotransferase family. Monomer.

The enzyme catalyses epsilon-(gamma-L-glutamyl)-L-lysine = 5-oxo-L-proline + L-lysine. Functionally, contributes to degradation of proteins cross-linked by transglutaminases by degrading the cross-link between a lysine and a glutamic acid residue. Catalyzes the formation of 5-oxo-L-proline from L-gamma-glutamyl-L-epsilon-lysine. Inactive with L-gamma-glutamyl-alpha-amino acid substrates such as L-gamma-glutamyl-L-alpha-cysteine and L-gamma-glutamyl-L-alpha-alanine. This Rattus norvegicus (Rat) protein is Gamma-glutamylaminecyclotransferase (Ggact).